The sequence spans 79 residues: Translational regulator CsrA (79 aa).

Belongs to the CsrA/RsmA family. As to quaternary structure, homodimer; the beta-strands of each monomer intercalate to form a hydrophobic core, while the alpha-helices form wings that extend away from the core.

The protein localises to the cytoplasm. A translational regulator that binds mRNA to regulate translation initiation and/or mRNA stability. Usually binds in the 5'-UTR at or near the Shine-Dalgarno sequence preventing ribosome-binding, thus repressing translation. Its main target seems to be the major flagellin gene, while its function is anatagonized by FliW. This Syntrophus aciditrophicus (strain SB) protein is Translational regulator CsrA.